Reading from the N-terminus, the 61-residue chain is Small ribosomal subunit protein uS14 (61 aa).

Residues cysteine 24, cysteine 27, cysteine 40, and cysteine 43 each coordinate Zn(2+).

This sequence belongs to the universal ribosomal protein uS14 family. Zinc-binding uS14 subfamily. In terms of assembly, part of the 30S ribosomal subunit. Contacts proteins S3 and S10. The cofactor is Zn(2+).

Functionally, binds 16S rRNA, required for the assembly of 30S particles and may also be responsible for determining the conformation of the 16S rRNA at the A site. In Clostridium kluyveri (strain NBRC 12016), this protein is Small ribosomal subunit protein uS14.